Here is a 371-residue protein sequence, read N- to C-terminus: Palmitoyl-monogalactosyldiacylglycerol delta-7 desaturase, chloroplastic (371 aa).

Residues M1–A67 constitute a chloroplast transit peptide. A run of 2 helical transmembrane segments spans residues F103–F123 and A127–F147. Positions H148 to H153 match the Histidine box-1 motif. The short motif at H185–H189 is the Histidine box-2 element. The helical transmembrane segment at A251–V271 threads the bilayer. Residues H317 to H321 carry the Histidine box-3 motif.

This sequence belongs to the fatty acid desaturase type 1 family. Fe(2+) is required as a cofactor. Highly expressed in young leaves. Low expression in roots.

It is found in the plastid. It localises to the chloroplast membrane. The enzyme catalyses a 1-acyl-2-hexadecanoyl-glycerolipid + 2 reduced [2Fe-2S]-[ferredoxin] + O2 + 2 H(+) = a 1-acyl-2-[(7Z)-hexadecenoyl]-glycerolipid + 2 oxidized [2Fe-2S]-[ferredoxin] + 2 H2O. It functions in the pathway lipid metabolism; oxylipin biosynthesis. Its pathway is lipid metabolism; polyunsaturated fatty acid biosynthesis. In terms of biological role, fatty acid desaturase involved in the first desaturation step leading to the formation of hexadeca 7,10,13-trienoic acid (16:3(7Z,10Z,13Z)), the major functional components of thylakoid membranes. Required for chloroplast biogenesis at low temperature. Also indirectly involved in the production of the oxylipin dinor-oxo-phyto-dienoic acid implicated in wound signaling. This Arabidopsis thaliana (Mouse-ear cress) protein is Palmitoyl-monogalactosyldiacylglycerol delta-7 desaturase, chloroplastic.